The primary structure comprises 352 residues: Isopentenyl-diphosphate delta-isomerase (352 aa).

Residue arginine 6–lysine 7 participates in substrate binding. FMN is bound by residues alanine 63 to threonine 65, serine 93, and asparagine 122. Residue serine 93–arginine 95 participates in substrate binding. Substrate is bound at residue glutamine 160. Glutamate 161 serves as a coordination point for Mg(2+). FMN is bound by residues lysine 192, threonine 221, glycine 271 to arginine 273, and serine 292 to glutamine 293.

This sequence belongs to the IPP isomerase type 2 family. In terms of assembly, homooctamer. Dimer of tetramers. It depends on FMN as a cofactor. NADPH is required as a cofactor. The cofactor is Mg(2+).

The protein localises to the cytoplasm. It catalyses the reaction isopentenyl diphosphate = dimethylallyl diphosphate. Functionally, involved in the biosynthesis of isoprenoids. Catalyzes the 1,3-allylic rearrangement of the homoallylic substrate isopentenyl (IPP) to its allylic isomer, dimethylallyl diphosphate (DMAPP). This chain is Isopentenyl-diphosphate delta-isomerase, found in Pyrobaculum aerophilum (strain ATCC 51768 / DSM 7523 / JCM 9630 / CIP 104966 / NBRC 100827 / IM2).